The sequence spans 408 residues: NADH-quinone oxidoreductase subunit D (408 aa).

Belongs to the complex I 49 kDa subunit family. As to quaternary structure, NDH-1 is composed of 14 different subunits. Subunits NuoB, C, D, E, F, and G constitute the peripheral sector of the complex.

The protein resides in the cell inner membrane. It carries out the reaction a quinone + NADH + 5 H(+)(in) = a quinol + NAD(+) + 4 H(+)(out). NDH-1 shuttles electrons from NADH, via FMN and iron-sulfur (Fe-S) centers, to quinones in the respiratory chain. The immediate electron acceptor for the enzyme in this species is believed to be ubiquinone. Couples the redox reaction to proton translocation (for every two electrons transferred, four hydrogen ions are translocated across the cytoplasmic membrane), and thus conserves the redox energy in a proton gradient. The sequence is that of NADH-quinone oxidoreductase subunit D from Campylobacter jejuni subsp. jejuni serotype O:2 (strain ATCC 700819 / NCTC 11168).